The following is a 1076-amino-acid chain: Vacuolar membrane protease (1076 aa).

Residues 1–11 lie on the Cytoplasmic side of the membrane; sequence MKCYNPSAFVP. The chain crosses the membrane as a helical span at residues 12–32; the sequence is MAVTLVTVVIYLGVFIPLLII. Residues 33-437 lie on the Vacuolar side of the membrane; that stretch reads HETVPSAPDD…TVFAVFRLRT (405 aa). 3 N-linked (GlcNAc...) asparagine glycosylation sites follow: Asn-50, Asn-99, and Asn-156. His-220 and Asp-232 together coordinate Zn(2+). Residue Glu-266 is the Proton acceptor of the active site. Glu-267, Glu-292, and His-364 together coordinate Zn(2+). Residues 438 to 458 traverse the membrane as a helical segment; it reads LFAWSLTLLIASPLILFAVSY. Topologically, residues 459–491 are cytoplasmic; that stretch reads LLNRQEKFYFFAGSIKSKNPEDEPISLGGWRGA. A helical membrane pass occupies residues 492–512; sequence FRFPITLFITSAITFACASLI. At 513-525 the chain is on the vacuolar side; that stretch reads NKINPMIIYSSPY. The helical transmembrane segment at 526 to 546 threads the bilayer; it reads AVWSMSATLFFSVFWFIMAGC. Over 547 to 556 the chain is Cytoplasmic; sequence NFVRPSALQR. The helical transmembrane segment at 557–577 threads the bilayer; that stretch reads GYAFMWMFVFGWILLVVATVY. The Vacuolar portion of the chain corresponds to 578–584; that stretch reads EDRFKIS. A helical membrane pass occupies residues 585-605; it reads GGYLFVFYEAAIFLATLIAIC. The Cytoplasmic segment spans residues 606-738; sequence EQFALPRKST…LPIWTWLVQY (133 aa). 2 disordered regions span residues 619–662 and 701–720; these read DSQN…EETV and SYDGPADHDDKKGHKKHPYG. The segment covering 621–632 has biased composition (basic and acidic residues); sequence QNDHSDNQDHHH. Residues 647 to 660 are compositionally biased toward acidic residues; the sequence is PNADDEAAEEDQEE. The chain crosses the membrane as a helical span at residues 739-759; it reads LLVGPFILVILGQVGLFLVAA. Topologically, residues 760–771 are vacuolar; it reads LHQTGTDGSPLF. A helical transmembrane segment spans residues 772–792; the sequence is LPYLIVAIFSILLLLPVTPFI. Topologically, residues 793-799 are cytoplasmic; sequence HRLTHHM. A helical transmembrane segment spans residues 800–820; sequence PTFFFLVFIGTLIYNLVAFPF. The Vacuolar portion of the chain corresponds to 821–1076; sequence SPNNRYKAYF…LGLAFLLAYV (256 aa). Asn-912 carries N-linked (GlcNAc...) asparagine glycosylation.

Belongs to the peptidase M28 family. Zn(2+) is required as a cofactor.

The protein resides in the vacuole membrane. May be involved in vacuolar sorting and osmoregulation. The protein is Vacuolar membrane protease of Sclerotinia sclerotiorum (strain ATCC 18683 / 1980 / Ss-1) (White mold).